Consider the following 214-residue polypeptide: Heat shock 70 kDa protein cognate 1 (214 aa).

It belongs to the heat shock protein 70 family.

The sequence is that of Heat shock 70 kDa protein cognate 1 (Hsc70-1) from Drosophila simulans (Fruit fly).